A 244-amino-acid polypeptide reads, in one-letter code: 3-deoxy-manno-octulosonate cytidylyltransferase (244 aa).

The protein belongs to the KdsB family.

It localises to the cytoplasm. The catalysed reaction is 3-deoxy-alpha-D-manno-oct-2-ulosonate + CTP = CMP-3-deoxy-beta-D-manno-octulosonate + diphosphate. The protein operates within nucleotide-sugar biosynthesis; CMP-3-deoxy-D-manno-octulosonate biosynthesis; CMP-3-deoxy-D-manno-octulosonate from 3-deoxy-D-manno-octulosonate and CTP: step 1/1. Its pathway is bacterial outer membrane biogenesis; lipopolysaccharide biosynthesis. Functionally, activates KDO (a required 8-carbon sugar) for incorporation into bacterial lipopolysaccharide in Gram-negative bacteria. The polypeptide is 3-deoxy-manno-octulosonate cytidylyltransferase (Flavobacterium johnsoniae (strain ATCC 17061 / DSM 2064 / JCM 8514 / BCRC 14874 / CCUG 350202 / NBRC 14942 / NCIMB 11054 / UW101) (Cytophaga johnsonae)).